The following is a 203-amino-acid chain: Glycerol-3-phosphate acyltransferase (203 aa).

5 consecutive transmembrane segments (helical) span residues 6–26 (LTLAMILTAYLAGSISSAVLV), 56–76 (AAAMVLLFDMLKGAVPAYVAF), 82–102 (AVSLGVIAIAACLGHIFPIFF), 118–138 (APIGADLSLALIATWVIVVLI), and 141–161 (YSSLAAIVTALLAPAYTWYFD).

This sequence belongs to the PlsY family. As to quaternary structure, probably interacts with PlsX.

Its subcellular location is the cell inner membrane. The catalysed reaction is an acyl phosphate + sn-glycerol 3-phosphate = a 1-acyl-sn-glycero-3-phosphate + phosphate. Its pathway is lipid metabolism; phospholipid metabolism. Catalyzes the transfer of an acyl group from acyl-phosphate (acyl-PO(4)) to glycerol-3-phosphate (G3P) to form lysophosphatidic acid (LPA). This enzyme utilizes acyl-phosphate as fatty acyl donor, but not acyl-CoA or acyl-ACP. In Shewanella loihica (strain ATCC BAA-1088 / PV-4), this protein is Glycerol-3-phosphate acyltransferase.